The primary structure comprises 247 residues: Carboxy-S-adenosyl-L-methionine synthase (247 aa).

S-adenosyl-L-methionine-binding positions include Tyr39, 64–66 (GCS), 89–90 (DN), 117–118 (DI), Asn132, and Arg199.

This sequence belongs to the class I-like SAM-binding methyltransferase superfamily. Cx-SAM synthase family. In terms of assembly, homodimer.

The enzyme catalyses prephenate + S-adenosyl-L-methionine = carboxy-S-adenosyl-L-methionine + 3-phenylpyruvate + H2O. Catalyzes the conversion of S-adenosyl-L-methionine (SAM) to carboxy-S-adenosyl-L-methionine (Cx-SAM). This Citrobacter koseri (strain ATCC BAA-895 / CDC 4225-83 / SGSC4696) protein is Carboxy-S-adenosyl-L-methionine synthase.